Here is a 353-residue protein sequence, read N- to C-terminus: Photosystem II protein D1 (353 aa).

T2 carries the N-acetylthreonine modification. T2 bears the Phosphothreonine mark. The next 3 helical transmembrane spans lie at Y29–S46, H118–L133, and W142–A156. Residue H118 coordinates chlorophyll a. Position 126 (Y126) interacts with pheophytin a. [CaMn4O5] cluster-binding residues include D170 and E189. A helical transmembrane segment spans residues F197–L218. H198 is a binding site for chlorophyll a. A quinone-binding positions include H215 and S264–F265. H215 is a binding site for Fe cation. Residue H272 coordinates Fe cation. The chain crosses the membrane as a helical span at residues F274–L288. Residues H332, E333, D342, and A344 each contribute to the [CaMn4O5] cluster site. A propeptide spanning residues S345–A353 is cleaved from the precursor.

It belongs to the reaction center PufL/M/PsbA/D family. PSII is composed of 1 copy each of membrane proteins PsbA, PsbB, PsbC, PsbD, PsbE, PsbF, PsbH, PsbI, PsbJ, PsbK, PsbL, PsbM, PsbT, PsbX, PsbY, PsbZ, Psb30/Ycf12, at least 3 peripheral proteins of the oxygen-evolving complex and a large number of cofactors. It forms dimeric complexes. It depends on The D1/D2 heterodimer binds P680, chlorophylls that are the primary electron donor of PSII, and subsequent electron acceptors. It shares a non-heme iron and each subunit binds pheophytin, quinone, additional chlorophylls, carotenoids and lipids. D1 provides most of the ligands for the Mn4-Ca-O5 cluster of the oxygen-evolving complex (OEC). There is also a Cl(-1) ion associated with D1 and D2, which is required for oxygen evolution. The PSII complex binds additional chlorophylls, carotenoids and specific lipids. as a cofactor. In terms of processing, tyr-161 forms a radical intermediate that is referred to as redox-active TyrZ, YZ or Y-Z. C-terminally processed by CTPA; processing is essential to allow assembly of the oxygen-evolving complex and thus photosynthetic growth.

It localises to the plastid. Its subcellular location is the chloroplast thylakoid membrane. It catalyses the reaction 2 a plastoquinone + 4 hnu + 2 H2O = 2 a plastoquinol + O2. Functionally, photosystem II (PSII) is a light-driven water:plastoquinone oxidoreductase that uses light energy to abstract electrons from H(2)O, generating O(2) and a proton gradient subsequently used for ATP formation. It consists of a core antenna complex that captures photons, and an electron transfer chain that converts photonic excitation into a charge separation. The D1/D2 (PsbA/PsbD) reaction center heterodimer binds P680, the primary electron donor of PSII as well as several subsequent electron acceptors. The sequence is that of Photosystem II protein D1 from Chara vulgaris (Common stonewort).